The primary structure comprises 72 residues: Large ribosomal subunit protein bL31 (72 aa).

Cys-16, Cys-18, Cys-37, and Cys-40 together coordinate Zn(2+).

The protein belongs to the bacterial ribosomal protein bL31 family. Type A subfamily. Part of the 50S ribosomal subunit. Zn(2+) is required as a cofactor.

Binds the 23S rRNA. The protein is Large ribosomal subunit protein bL31 of Hahella chejuensis (strain KCTC 2396).